Here is a 338-residue protein sequence, read N- to C-terminus: Glycerol-3-phosphate dehydrogenase [NAD(P)+] (338 aa).

NADPH contacts are provided by Ser-11, Trp-12, His-32, His-33, and Lys-109. Lys-109, Gly-140, and Ser-142 together coordinate sn-glycerol 3-phosphate. Ala-144 provides a ligand contact to NADPH. The sn-glycerol 3-phosphate site is built by Lys-195, Asp-248, Ser-258, Arg-259, and Asn-260. Lys-195 serves as the catalytic Proton acceptor. Arg-259 serves as a coordination point for NADPH. The NADPH site is built by Val-283 and Glu-285.

The protein belongs to the NAD-dependent glycerol-3-phosphate dehydrogenase family.

It is found in the cytoplasm. The catalysed reaction is sn-glycerol 3-phosphate + NAD(+) = dihydroxyacetone phosphate + NADH + H(+). It carries out the reaction sn-glycerol 3-phosphate + NADP(+) = dihydroxyacetone phosphate + NADPH + H(+). Its pathway is membrane lipid metabolism; glycerophospholipid metabolism. In terms of biological role, catalyzes the reduction of the glycolytic intermediate dihydroxyacetone phosphate (DHAP) to sn-glycerol 3-phosphate (G3P), the key precursor for phospholipid synthesis. This is Glycerol-3-phosphate dehydrogenase [NAD(P)+] from Leuconostoc citreum (strain KM20).